A 330-amino-acid chain; its full sequence is Cyclin-dependent kinase 7 (330 aa).

The Protein kinase domain occupies 5–289 (YDTIKHLGEG…CTQSLQMEYF (285 aa)). ATP-binding positions include 11-19 (LGEGQFANV) and Lys-34. Residue Asp-130 is the Proton acceptor of the active site. Thr-163 carries the phosphothreonine modification. The tract at residues 305–330 (KKQQPQKRSRRLDDDGTRPVRRLNFD) is disordered. A compositionally biased stretch (basic and acidic residues) spans 315–330 (RLDDDGTRPVRRLNFD).

Belongs to the protein kinase superfamily. CMGC Ser/Thr protein kinase family. CDC2/CDKX subfamily. As to quaternary structure, catalytic component which, in association with cyclin H (cyh-1) and mat1, is likely to form the CAK complex.

It catalyses the reaction L-seryl-[protein] + ATP = O-phospho-L-seryl-[protein] + ADP + H(+). It carries out the reaction L-threonyl-[protein] + ATP = O-phospho-L-threonyl-[protein] + ADP + H(+). The catalysed reaction is [DNA-directed RNA polymerase] + ATP = phospho-[DNA-directed RNA polymerase] + ADP + H(+). Its function is as follows. Serine/threonine kinase involved in cell cycle control and in RNA polymerase II-mediated RNA transcription. Required for maintaining chromosome ploidy. May phosphorylate the large subunit of RNA polymerase II, ama-1. This Caenorhabditis elegans protein is Cyclin-dependent kinase 7.